Here is a 117-residue protein sequence, read N- to C-terminus: Large ribosomal subunit protein bL20 (117 aa).

Belongs to the bacterial ribosomal protein bL20 family.

In terms of biological role, binds directly to 23S ribosomal RNA and is necessary for the in vitro assembly process of the 50S ribosomal subunit. It is not involved in the protein synthesizing functions of that subunit. This is Large ribosomal subunit protein bL20 from Maridesulfovibrio salexigens (strain ATCC 14822 / DSM 2638 / NCIMB 8403 / VKM B-1763) (Desulfovibrio salexigens).